A 166-amino-acid chain; its full sequence is PTS system glucose-specific EIIA component (166 aa).

The 105-residue stretch at 36-140 (DVVFSEKIVG…SVLTPIVISN (105 aa)) folds into the PTS EIIA type-1 domain. Zn(2+)-binding residues include H73 and H88. The active-site Tele-phosphohistidine intermediate; for EIIA activity is the H88. H88 is subject to Phosphohistidine; by HPr.

In terms of assembly, heterodimer with glycerol kinase (glpk). Zn(2+) is required as a cofactor.

The protein resides in the cytoplasm. The phosphoenolpyruvate-dependent sugar phosphotransferase system (sugar PTS), a major carbohydrate active transport system, catalyzes the phosphorylation of incoming sugar substrates concomitantly with their translocation across the cell membrane. The enzyme II complex composed of PtsG and Crr is involved in glucose transport. The chain is PTS system glucose-specific EIIA component (crr) from Haemophilus influenzae (strain ATCC 51907 / DSM 11121 / KW20 / Rd).